We begin with the raw amino-acid sequence, 209 residues long: NAD(P)H dehydrogenase (quinone) (209 aa).

The Flavodoxin-like domain occupies 4 to 199 (VNIIFYSMYG…AMARYQGRHV (196 aa)). FMN-binding positions include 10–15 (SMYGHV) and 87–89 (TRY). Residue Tyr12 participates in NAD(+) binding. Substrate is bound at residue Trp107. FMN-binding positions include 122-128 (SSGTQHG) and His143.

This sequence belongs to the WrbA family. FMN serves as cofactor.

The enzyme catalyses a quinone + NADH + H(+) = a quinol + NAD(+). The catalysed reaction is a quinone + NADPH + H(+) = a quinol + NADP(+). The polypeptide is NAD(P)H dehydrogenase (quinone) (Methanosarcina acetivorans (strain ATCC 35395 / DSM 2834 / JCM 12185 / C2A)).